Reading from the N-terminus, the 193-residue chain is Potassium-transporting ATPase KdpC subunit (193 aa).

A helical membrane pass occupies residues 8 to 28 (VVLLIFLTLITGVAYPLLATG).

It belongs to the KdpC family. The system is composed of three essential subunits: KdpA, KdpB and KdpC.

The protein localises to the cell inner membrane. Its function is as follows. Part of the high-affinity ATP-driven potassium transport (or Kdp) system, which catalyzes the hydrolysis of ATP coupled with the electrogenic transport of potassium into the cytoplasm. This subunit acts as a catalytic chaperone that increases the ATP-binding affinity of the ATP-hydrolyzing subunit KdpB by the formation of a transient KdpB/KdpC/ATP ternary complex. This chain is Potassium-transporting ATPase KdpC subunit, found in Photorhabdus laumondii subsp. laumondii (strain DSM 15139 / CIP 105565 / TT01) (Photorhabdus luminescens subsp. laumondii).